A 396-amino-acid chain; its full sequence is Purine ribonucleoside efflux pump NepI (396 aa).

Residues Met1–Ala21 are Cytoplasmic-facing. The chain crosses the membrane as a helical span at residues Val22–Leu42. Residues Leu43–Glu54 are Periplasmic-facing. A helical transmembrane segment spans residues Gly55–Ile75. The Cytoplasmic segment spans residues Thr76 to Arg85. Residues Tyr86–Asn106 traverse the membrane as a helical segment. Ser107 is a topological domain (periplasmic). The chain crosses the membrane as a helical span at residues Phe108 to Ile128. Topologically, residues Ser129–Ser147 are cytoplasmic. The helical transmembrane segment at Val148–Gly168 threads the bilayer. Over Glu169–Asn175 the chain is Periplasmic. A helical transmembrane segment spans residues Val176–Pro196. Residues Ser197–Arg215 are Cytoplasmic-facing. The helical transmembrane segment at Pro216–Phe236 threads the bilayer. The Periplasmic portion of the chain corresponds to Thr237–Thr255. The chain crosses the membrane as a helical span at residues Leu256–Leu276. At Lys277–Lys281 the chain is on the cytoplasmic side. Residues Leu282 to Gly302 traverse the membrane as a helical segment. Over Ser303 to Lys305 the chain is Periplasmic. A helical membrane pass occupies residues Ile306–Trp326. The Cytoplasmic portion of the chain corresponds to Ser327–Ser343. A helical transmembrane segment spans residues Ile344–Leu364. Residues Asp365–Asn366 are Periplasmic-facing. A helical membrane pass occupies residues Ile367–Val387. The Cytoplasmic portion of the chain corresponds to Thr388 to Ser396.

It belongs to the major facilitator superfamily. DHA1 family. NepI (TC 2.A.1.2.26) subfamily.

The protein resides in the cell inner membrane. It carries out the reaction inosine(in) + H(+)(out) = inosine(out) + H(+)(in). The catalysed reaction is guanosine(in) + H(+)(out) = guanosine(out) + H(+)(in). In terms of biological role, involved in the efflux of purine ribonucleosides, such as inosine and guanosine. This is Purine ribonucleoside efflux pump NepI from Escherichia coli O6:K15:H31 (strain 536 / UPEC).